Reading from the N-terminus, the 420-residue chain is Serine hydroxymethyltransferase (420 aa).

(6S)-5,6,7,8-tetrahydrofolate contacts are provided by residues Leu123 and 127–129 (GHL). Lys232 is subject to N6-(pyridoxal phosphate)lysine. 357–359 (SPF) provides a ligand contact to (6S)-5,6,7,8-tetrahydrofolate.

It belongs to the SHMT family. As to quaternary structure, homodimer. The cofactor is pyridoxal 5'-phosphate.

Its subcellular location is the cytoplasm. It carries out the reaction (6R)-5,10-methylene-5,6,7,8-tetrahydrofolate + glycine + H2O = (6S)-5,6,7,8-tetrahydrofolate + L-serine. The protein operates within one-carbon metabolism; tetrahydrofolate interconversion. Its pathway is amino-acid biosynthesis; glycine biosynthesis; glycine from L-serine: step 1/1. Its function is as follows. Catalyzes the reversible interconversion of serine and glycine with tetrahydrofolate (THF) serving as the one-carbon carrier. This reaction serves as the major source of one-carbon groups required for the biosynthesis of purines, thymidylate, methionine, and other important biomolecules. Also exhibits THF-independent aldolase activity toward beta-hydroxyamino acids, producing glycine and aldehydes, via a retro-aldol mechanism. This is Serine hydroxymethyltransferase from Streptococcus pyogenes serotype M4 (strain MGAS10750).